The following is a 200-amino-acid chain: Transcription elongation factor A protein-like 3 (200 aa).

Over residues M1 to E19 the composition is skewed to basic and acidic residues. The segment at M1–L200 is disordered. Over residues D20–E34 the composition is skewed to acidic residues. S30 carries the phosphoserine modification. Basic and acidic residues-rich tracts occupy residues G47 to S85, R94 to P106, and D114 to R153.

Belongs to the TFS-II family. TFA subfamily.

It localises to the nucleus. Its function is as follows. May be involved in transcriptional regulation. The sequence is that of Transcription elongation factor A protein-like 3 (Tceal3) from Mus musculus (Mouse).